A 224-amino-acid polypeptide reads, in one-letter code: Thiamine-phosphate synthase (224 aa).

4-amino-2-methyl-5-(diphosphooxymethyl)pyrimidine-binding positions include 44–48 and Asn-79; that span reads QFREK. Residues Asp-80 and Asp-99 each coordinate Mg(2+). Residue Ser-117 participates in 4-amino-2-methyl-5-(diphosphooxymethyl)pyrimidine binding. 143–145 serves as a coordination point for 2-[(2R,5Z)-2-carboxy-4-methylthiazol-5(2H)-ylidene]ethyl phosphate; the sequence is TST. Lys-146 is a 4-amino-2-methyl-5-(diphosphooxymethyl)pyrimidine binding site. Residues Gly-175 and 195–196 contribute to the 2-[(2R,5Z)-2-carboxy-4-methylthiazol-5(2H)-ylidene]ethyl phosphate site; that span reads IS.

It belongs to the thiamine-phosphate synthase family. Requires Mg(2+) as cofactor.

It catalyses the reaction 2-[(2R,5Z)-2-carboxy-4-methylthiazol-5(2H)-ylidene]ethyl phosphate + 4-amino-2-methyl-5-(diphosphooxymethyl)pyrimidine + 2 H(+) = thiamine phosphate + CO2 + diphosphate. It carries out the reaction 2-(2-carboxy-4-methylthiazol-5-yl)ethyl phosphate + 4-amino-2-methyl-5-(diphosphooxymethyl)pyrimidine + 2 H(+) = thiamine phosphate + CO2 + diphosphate. The catalysed reaction is 4-methyl-5-(2-phosphooxyethyl)-thiazole + 4-amino-2-methyl-5-(diphosphooxymethyl)pyrimidine + H(+) = thiamine phosphate + diphosphate. Its pathway is cofactor biosynthesis; thiamine diphosphate biosynthesis; thiamine phosphate from 4-amino-2-methyl-5-diphosphomethylpyrimidine and 4-methyl-5-(2-phosphoethyl)-thiazole: step 1/1. Its function is as follows. Condenses 4-methyl-5-(beta-hydroxyethyl)thiazole monophosphate (THZ-P) and 2-methyl-4-amino-5-hydroxymethyl pyrimidine pyrophosphate (HMP-PP) to form thiamine monophosphate (TMP). This is Thiamine-phosphate synthase from Bacillus cereus (strain ATCC 10987 / NRS 248).